Consider the following 153-residue polypeptide: MGSFSTIMASFLLFLAFQLQGQTRANPVYGSVSNGDLMDFKNLLDRLEDKMPLEDEVMPPQVLSDQSEEERAALSPLPEVPPWTGEVNPAQRDGGALGRGSWDSSDRSALLKSKLRALLAAPRSLRRSSCFGGRMDRIGAQSGLGCNSFRYRR.

An N-terminal signal peptide occupies residues 1 to 25 (MGSFSTIMASFLLFLAFQLQGQTRA). Propeptides lie at residues 26–123 (NPVY…AAPR) and 93–103 (DGGALGRGSWD). Residues 54–105 (EDEVMPPQVLSDQSEEERAALSPLPEVPPWTGEVNPAQRDGGALGRGSWDSS) form a disordered region. Ser-129 carries the post-translational modification Phosphoserine. Cys-130 and Cys-146 are oxidised to a cystine. The interval 147–151 (NSFRY) is important for degradation of atrial natriuretic peptide by IDE.

It belongs to the natriuretic peptide family. In terms of assembly, homodimer; disulfide-linked antiparallel dimer. In terms of processing, the precursor molecule is proteolytically cleaved by CORIN at Arg-123 to produce the atrial natriuretic peptide. Undergoes further proteolytic cleavage by unknown proteases to give rise to long-acting natriuretic peptide, vessel dilator and kaliuretic peptide. Additional processing gives rise to the auriculin and atriopeptin peptides. In the kidneys, alternative processing by an unknown protease results in the peptide urodilatin. Cleavage by MME initiates degradation of the factor and thereby regulates its activity. Degradation by IDE results in reduced activation of NPR1 (in vitro). During IDE degradation, the resulting products can temporarily stimulate NPR2 to produce cGMP, before the fragments are completely degraded and inactivated by IDE (in vitro). Post-translationally, degraded by IDE. In terms of processing, phosphorylation on Ser-129 decreases vasorelaxant activity.

Its subcellular location is the secreted. The protein resides in the perikaryon. It localises to the cell projection. Functionally, hormone that plays a key role in mediating cardio-renal homeostasis, and is involved in vascular remodeling and regulating energy metabolism. Acts by specifically binding and stimulating NPR1 to produce cGMP, which in turn activates effector proteins, such as PRKG1, that drive various biological responses. Regulates vasodilation, natriuresis, diuresis and aldosterone synthesis and is therefore essential for regulating blood pressure, controlling the extracellular fluid volume and maintaining the fluid-electrolyte balance. Also involved in inhibiting cardiac remodeling and cardiac hypertrophy by inducing cardiomyocyte apoptosis and attenuating the growth of cardiomyocytes and fibroblasts. Plays a role in female pregnancy by promoting trophoblast invasion and spiral artery remodeling in uterus, and thus prevents pregnancy-induced hypertension. In adipose tissue, acts in various cGMP- and PKG-dependent pathways to regulate lipid metabolism and energy homeostasis. This includes up-regulating lipid metabolism and mitochondrial oxygen utilization by activating the AMP-activated protein kinase (AMPK), and increasing energy expenditure by acting via MAPK11 to promote the UCP1-dependent thermogenesis of brown adipose tissue. Binds the clearance receptor NPR3 which removes the hormone from circulation. In terms of biological role, may have a role in cardio-renal homeostasis through regulation of natriuresis, diuresis, vasodilation, and inhibiting aldosterone synthesis. In vitro, promotes the production of cGMP and induces vasodilation. May promote natriuresis, at least in part, by enhancing prostaglandin E2 synthesis resulting in the inhibition of renal Na+-K+-ATPase. However reports on the involvement of this peptide in mammal blood volume and blood pressure homeostasis are conflicting; according to a report, in vivo it is not sufficient to activate cGMP and does not inhibit collecting duct transport nor effect diuresis and natriuresis. Appears to bind to specific receptors that are distinct from the receptors bound by atrial natriuretic peptide and vessel dilator. Possibly enhances protein excretion in urine by decreasing proximal tubular protein reabsorption. Its function is as follows. May have a role in cardio-renal homeostasis through regulation of natriuresis, diuresis, and vasodilation. In vitro, promotes the production of cGMP and induces vasodilation. May promote natriuresis, at least in part, by enhancing prostaglandin E2 synthesis resulting in the inhibition of renal Na+-K+-ATPase. However reports on the involvement of this peptide in mammal blood volume and blood pressure homeostasis are conflicting; according to a report it is not sufficient to activate cGMP and does not inhibit collecting duct transport nor effect diuresis and natriuresis. Appears to bind to specific receptors that are distinct from the receptors bound by the atrial natriuretic and long-acting natriuretic peptides. Possibly functions in protein excretion in urine by maintaining the integrity of the proximal tubules and enhancing protein excretion by decreasing proximal tubular protein reabsorption. May have a role in cardio-renal homeostasis through regulation of diuresis and inhibiting aldosterone synthesis. In vitro, promotes the production of cGMP and induces vasodilation. May promote natriuresis, at least in part, by enhancing prostaglandin E2 synthesis resulting in the inhibition of renal Na+-K+-ATPase. May have a role in potassium excretion but not sodium excretion (natriuresis). Possibly enhances protein excretion in urine by decreasing proximal tubular protein reabsorption. Functionally, hormone produced in the kidneys that appears to be important for maintaining cardio-renal homeostasis. Mediates vasodilation, natriuresis and diuresis primarily in the renal system, in order to maintain the extracellular fluid volume and control the fluid-electrolyte balance. Specifically binds and stimulates cGMP production by renal transmembrane receptors, likely NPR1. Urodilatin not ANP, may be the natriuretic peptide responsible for the regulation of sodium and water homeostasis in the kidney. In terms of biological role, may have a role in cardio-renal homeostasis through regulation of natriuresis and vasodilation. In vivo promotes natriuresis and in vitro, vasodilates renal artery strips. Its function is as follows. May have a role in cardio-renal homeostasis through regulation of regulation of natriuresis and vasodilation. In vivo promotes natriuresis. In vitro, vasodilates intestinal smooth muscle but not smooth muscle strips. May have a role in cardio-renal homeostasis through regulation of natriuresis and vasodilation. In vivo promotes natriuresis. In vitro, selectively vasodilates intestinal and vascular smooth muscle strips. Functionally, may have a role in cardio-renal homeostasis through regulation of natriuresis and vasodilation. In vivo promotes natriuresis. In vitro, selectively vasodilates intestinal smooth muscle but not vascular smooth muscle strips. The polypeptide is Natriuretic peptides A (NPPA) (Equus caballus (Horse)).